The chain runs to 159 residues: Small ribosomal subunit protein uS7 (159 aa).

This sequence belongs to the universal ribosomal protein uS7 family. As to quaternary structure, part of the 30S ribosomal subunit. Contacts proteins S9 and S11.

Its function is as follows. One of the primary rRNA binding proteins, it binds directly to 16S rRNA where it nucleates assembly of the head domain of the 30S subunit. Is located at the subunit interface close to the decoding center, probably blocks exit of the E-site tRNA. In Endomicrobium trichonymphae, this protein is Small ribosomal subunit protein uS7.